The following is a 451-amino-acid chain: MGLKNLIIRGRNYISDHLTKSSLEKAIIRRQKRGKVIENEKLIILGCGWGSYSFLKNLNSIKYDITVISPRNHFLFTPLLTSSAVGTLEFRSIAEPVRTTRDINEFKYIQASVTSINPENNSVLVKSTFHNEKPFEMKYDKLVIGVGSRNNTFGIKGVEENANFLKELHHAREIRQKIIECFERASLPDVSTEERERLLSFVIVGGGATGIEFTSELNDFFSEDLSRLFPFVPVNEVKIILLEASGKILSTFDQKLVKKALINFRNSGIDVRTHSSVKEVLKDYVILDNGDRIPYGLLVWSTGIGQHPLVKNSSFEKDSHDRIIVDDHLRVKNYSNVFSFGDCANVENKNYPPTAQVASQSAVYLAKEFNNLEKLNPNPPKPFAFKFLGLLAYTGKKSGILQTDFFDLSGFIGFITWRSAYLTRLGSLRSKIQVPFDWMRTLIFGRDISSF.

Residue 41 to 71 (KLIILGCGWGSYSFLKNLNSIKYDITVISPR) coordinates FAD. Residue 199 to 236 (LSFVIVGGGATGIEFTSELNDFFSEDLSRLFPFVPVNE) coordinates NAD(+).

This sequence belongs to the NADH dehydrogenase family. The cofactor is FAD.

It catalyses the reaction a ubiquinone + NADH + 5 H(+)(in) = a ubiquinol + NAD(+) + 4 H(+)(out). This is Probable NADH dehydrogenase from Dictyostelium discoideum (Social amoeba).